A 444-amino-acid chain; its full sequence is Phosphoglucosamine mutase (444 aa).

The active-site Phosphoserine intermediate is the Ser-101. Mg(2+) contacts are provided by Ser-101, Asp-240, Asp-242, and Asp-244. Residue Ser-101 is modified to Phosphoserine.

The protein belongs to the phosphohexose mutase family. Mg(2+) serves as cofactor. In terms of processing, activated by phosphorylation.

It catalyses the reaction alpha-D-glucosamine 1-phosphate = D-glucosamine 6-phosphate. Functionally, catalyzes the conversion of glucosamine-6-phosphate to glucosamine-1-phosphate. In Aeromonas hydrophila subsp. hydrophila (strain ATCC 7966 / DSM 30187 / BCRC 13018 / CCUG 14551 / JCM 1027 / KCTC 2358 / NCIMB 9240 / NCTC 8049), this protein is Phosphoglucosamine mutase.